We begin with the raw amino-acid sequence, 535 residues long: E3 ubiquitin-protein ligase rnf168 (535 aa).

The segment at 16–55 (CPICQEILLEPVTLPCKHTLCNPCFQMTVEKASLCCPFCR) adopts an RING-type zinc-finger fold. Positions 112 to 130 (LCKPGEIRQEYEAEVSKIE) match the LR motif 1 motif. Residues 145-153 (EDYIQKLLA) carry the UMI motif motif. Short sequence motifs (MIU motif) lie at residues 170-193 (IEEQ…LSNA) and 406-429 (RRKQ…KELK). Residues 429-443 (KQVNRGKGSPDEYQL) are compositionally biased toward basic and acidic residues. Residues 429–535 (KQVNRGKGSP…LDLFQRSAGK (107 aa)) are disordered. Positions 433–444 (RGKGSPDEYQLR) match the LR motif 2 motif. Polar residues-rich tracts occupy residues 462 to 478 (NEQT…QSGY) and 492 to 507 (ITSS…TNTE).

The protein belongs to the RNF168 family. In terms of assembly, monomer.

Its subcellular location is the nucleus. The enzyme catalyses S-ubiquitinyl-[E2 ubiquitin-conjugating enzyme]-L-cysteine + [acceptor protein]-L-lysine = [E2 ubiquitin-conjugating enzyme]-L-cysteine + N(6)-ubiquitinyl-[acceptor protein]-L-lysine.. Its pathway is protein modification; protein ubiquitination. E3 ubiquitin-protein ligase required for accumulation of repair proteins to sites of DNA damage. Acts with ube2n/ubc13 to amplify the rnf8-dependent histone ubiquitination. Recruited to sites of DNA damage at double-strand breaks (DSBs) by binding to ubiquitinated histone H2A and ubiquitinates histone H2A and H2AX, leading to amplify the rnf8-dependent H2A ubiquitination and promoting the formation of 'Lys-63'-linked ubiquitin conjugates. This leads to concentrate ubiquitinated histones H2A and H2AX at DNA lesions to the threshold required for recruitment of tp53bp1 and brca1. Catalyzes monoubiquitination of 'Lys-13' and 'Lys-15' of nucleosomal histone H2A (H2AK13Ub and H2AK15Ub, respectively). This Xenopus tropicalis (Western clawed frog) protein is E3 ubiquitin-protein ligase rnf168.